A 102-amino-acid chain; its full sequence is Putative septation protein SpoVG 1 (102 aa).

The protein belongs to the SpoVG family.

Could be involved in septation. The polypeptide is Putative septation protein SpoVG 1 (Listeria monocytogenes serotype 4b (strain F2365)).